The primary structure comprises 200 residues: Small ribosomal subunit protein eS8A (200 aa).

Disordered stretches follow at residues 1-40 (MGIT…RIGP) and 123-145 (SKGK…KHSA). Residues 135–145 (KSKHVQRKHSA) are compositionally biased toward basic residues.

It belongs to the eukaryotic ribosomal protein eS8 family. Component of the small ribosomal subunit (SSU). Mature yeast ribosomes consist of a small (40S) and a large (60S) subunit. The 40S small subunit contains 1 molecule of ribosomal RNA (18S rRNA) and at least 33 different proteins. The large 60S subunit contains 3 rRNA molecules (25S, 5.8S and 5S rRNA) and at least 46 different proteins.

It localises to the cytoplasm. Its function is as follows. Component of the ribosome, a large ribonucleoprotein complex responsible for the synthesis of proteins in the cell. The small ribosomal subunit (SSU) binds messenger RNAs (mRNAs) and translates the encoded message by selecting cognate aminoacyl-transfer RNA (tRNA) molecules. The large subunit (LSU) contains the ribosomal catalytic site termed the peptidyl transferase center (PTC), which catalyzes the formation of peptide bonds, thereby polymerizing the amino acids delivered by tRNAs into a polypeptide chain. The nascent polypeptides leave the ribosome through a tunnel in the LSU and interact with protein factors that function in enzymatic processing, targeting, and the membrane insertion of nascent chains at the exit of the ribosomal tunnel. The chain is Small ribosomal subunit protein eS8A (rps801) from Schizosaccharomyces pombe (strain 972 / ATCC 24843) (Fission yeast).